A 93-amino-acid polypeptide reads, in one-letter code: MFWASIGRACAIRRRARTTRSARPAEGPGQERRRFGYRRLHVLLRREGHAVNRKRVQRIYRDEQLTVRRRAPQASDGHAATVTCRWRPTSAGR.

2 disordered regions span residues 14–33 (RRAR…QERR) and 68–93 (RRRA…SAGR).

This Rhizobium sp protein is Insertion element ISR1 uncharacterized 11 kDa protein A1.